Reading from the N-terminus, the 130-residue chain is uncharacterized protein (130 aa).

Residues 8–28 (PFILMIIVLGLFLVSIGGYYY) form a helical membrane-spanning segment.

It is found in the membrane. This is an uncharacterized protein from Bacillus anthracis.